A 285-amino-acid chain; its full sequence is Pantothenate synthetase (285 aa).

30 to 37 contributes to the ATP binding site; it reads MGYLHEGH. His-37 functions as the Proton donor in the catalytic mechanism. Residue Gln-61 participates in (R)-pantoate binding. Position 61 (Gln-61) interacts with beta-alanine. Residue 148 to 151 coordinates ATP; the sequence is GKKD. Gln-154 contacts (R)-pantoate. Residues Val-177 and 185-188 each bind ATP; that span reads LSSR.

It belongs to the pantothenate synthetase family. In terms of assembly, homodimer.

It localises to the cytoplasm. It carries out the reaction (R)-pantoate + beta-alanine + ATP = (R)-pantothenate + AMP + diphosphate + H(+). It functions in the pathway cofactor biosynthesis; (R)-pantothenate biosynthesis; (R)-pantothenate from (R)-pantoate and beta-alanine: step 1/1. Catalyzes the condensation of pantoate with beta-alanine in an ATP-dependent reaction via a pantoyl-adenylate intermediate. The protein is Pantothenate synthetase of Leptospira interrogans serogroup Icterohaemorrhagiae serovar Lai (strain 56601).